Reading from the N-terminus, the 329-residue chain is Peroxidase 30 (329 aa).

The first 27 residues, 1-27, serve as a signal peptide directing secretion; the sequence is MKTMTQLNIAVVVVVTVLIGMLRSSEA. 4 disulfide bridges follow: Cys-38–Cys-116, Cys-71–Cys-76, Cys-122–Cys-324, and Cys-201–Cys-234. Catalysis depends on His-69, which acts as the Proton acceptor. The Ca(2+) site is built by Asp-70, Val-73, Gly-75, Asp-77, and Ser-79. 2 N-linked (GlcNAc...) asparagine glycosylation sites follow: Asn-83 and Asn-155. Residues 141–165 are disordered; it reads SWSVPTGRRDGRISNKTEATNNIPP. The span at 156 to 165 shows a compositional bias: polar residues; the sequence is KTEATNNIPP. A substrate-binding site is contributed by Pro-164. The N-linked (GlcNAc...) asparagine glycan is linked to Asn-169. Heme b is bound at residue His-194. Thr-195 contributes to the Ca(2+) binding site. N-linked (GlcNAc...) asparagine glycosylation is found at Asn-210 and Asn-240. Residues Asp-247, Ser-250, and Asp-255 each coordinate Ca(2+). N-linked (GlcNAc...) asparagine glycosylation occurs at Asn-290.

It belongs to the peroxidase family. Classical plant (class III) peroxidase subfamily. It depends on heme b as a cofactor. The cofactor is Ca(2+). In terms of tissue distribution, mainly expressed in roots.

The protein localises to the secreted. The catalysed reaction is 2 a phenolic donor + H2O2 = 2 a phenolic radical donor + 2 H2O. Its function is as follows. Removal of H(2)O(2), oxidation of toxic reductants, biosynthesis and degradation of lignin, suberization, auxin catabolism, response to environmental stresses such as wounding, pathogen attack and oxidative stress. These functions might be dependent on each isozyme/isoform in each plant tissue. This chain is Peroxidase 30 (PER30), found in Arabidopsis thaliana (Mouse-ear cress).